Reading from the N-terminus, the 118-residue chain is SPbeta prophage-derived uncharacterized protein YomS (118 aa).

This chain is SPbeta prophage-derived uncharacterized protein YomS (yomS), found in Bacillus subtilis (strain 168).